The primary structure comprises 185 residues: Bcl-2-modifying factor (185 aa).

Positions 1-28 (MEPPQCVEELEDDVFQSEDGEPGTQPGG) are disordered. A compositionally biased stretch (acidic residues) spans 8–21 (EELEDDVFQSEDGE). Positions 67-75 (DKATQTLSP) are interaction with DLC2. Residues 134–148 (IARKLQCIADQFHRL) carry the BH3 motif.

The protein belongs to the Bcl-2 family. In terms of assembly, interacts with MCL1, BCL2, BCL2L1/BCL-Xl, BCL2A1 and BCL2L2/BCL-w. Interacts with the myosin V actin motor complex through its binding to DLC2. In terms of tissue distribution, widely expressed with an abundant expression in pancreas, liver kidney and hematopoietic tissues.

Its function is as follows. May play a role in apoptosis. The protein is Bcl-2-modifying factor (Bmf) of Mus musculus (Mouse).